Here is a 279-residue protein sequence, read N- to C-terminus: Ribosomal RNA small subunit methyltransferase A (279 aa).

Leu-42, Gly-67, Glu-88, Asp-113, and Asn-129 together coordinate S-adenosyl-L-methionine.

It belongs to the class I-like SAM-binding methyltransferase superfamily. rRNA adenine N(6)-methyltransferase family. RsmA subfamily.

It is found in the cytoplasm. It carries out the reaction adenosine(1518)/adenosine(1519) in 16S rRNA + 4 S-adenosyl-L-methionine = N(6)-dimethyladenosine(1518)/N(6)-dimethyladenosine(1519) in 16S rRNA + 4 S-adenosyl-L-homocysteine + 4 H(+). Specifically dimethylates two adjacent adenosines (A1518 and A1519) in the loop of a conserved hairpin near the 3'-end of 16S rRNA in the 30S particle. May play a critical role in biogenesis of 30S subunits. The protein is Ribosomal RNA small subunit methyltransferase A of Thermotoga maritima (strain ATCC 43589 / DSM 3109 / JCM 10099 / NBRC 100826 / MSB8).